The primary structure comprises 425 residues: Terminal nucleotidyltransferase 5B (425 aa).

Residues 1 to 42 are disordered; it reads MMPSESGAERRDRAAAQVGTAAATAVATAAPAGGGPDPEALS. Positions 15–31 are enriched in low complexity; sequence AAQVGTAAATAVATAAP.

This sequence belongs to the TENT family.

It localises to the cytoplasm. The protein localises to the nucleus. It carries out the reaction RNA(n) + ATP = RNA(n)-3'-adenine ribonucleotide + diphosphate. Functionally, catalyzes the transfer of one adenosine molecule from an ATP to an mRNA poly(A) tail bearing a 3'-OH terminal group in an ATP hydrolysis-dependent manner. May be involved in maintaining the translation efficiency of at least some genes through preventing degradation of their mRNAs. Prefers RNA molecules that are adenosine-rich close to 3'-end. In addition, may inhibit cell proliferation and cell cycle progression through ubiquitination of beta-catenin/CTNNB1. This chain is Terminal nucleotidyltransferase 5B, found in Homo sapiens (Human).